Here is a 137-residue protein sequence, read N- to C-terminus: ATP synthase epsilon chain, chloroplastic (137 aa).

Belongs to the ATPase epsilon chain family. In terms of assembly, F-type ATPases have 2 components, CF(1) - the catalytic core - and CF(0) - the membrane proton channel. CF(1) has five subunits: alpha(3), beta(3), gamma(1), delta(1), epsilon(1). CF(0) has three main subunits: a, b and c.

Its subcellular location is the plastid. It is found in the chloroplast thylakoid membrane. Functionally, produces ATP from ADP in the presence of a proton gradient across the membrane. The protein is ATP synthase epsilon chain, chloroplastic of Bigelowiella natans (Pedinomonas minutissima).